The primary structure comprises 195 residues: Myelin-associated neurite-outgrowth inhibitor (195 aa).

An N-acetylmethionine modification is found at methionine 1. The Cytoplasmic segment spans residues 1–18 (MNPVYSPGSSGVPYANAK). The residue at position 6 (serine 6) is a Phosphoserine. A helical membrane pass occupies residues 19–42 (GIGYPAGFPMGYAAAAPAYSPNMY). Over 43 to 142 (PGANPTFQTG…PAPIPPPRGN (100 aa)) the chain is Extracellular. Asparagine 46 carries an N-linked (GlcNAc...) asparagine glycan. The chain crosses the membrane as a helical span at residues 143–164 (GVTMGMVAGTTMAMSAGTLLTA). Residues 165 to 195 (HSPTPVAPHPVTVPTYRAPGTPTYSYVPPQW) are Cytoplasmic-facing.

This sequence belongs to the FAM168 family. In terms of assembly, may form homodimers. May interact with DAZAP2, FAM168A, PRDX6, RBM6, TMTC1 and YPEL2. Interacts with CDC27. In terms of processing, N-glycosylated. As to expression, expressed in the brain, within neuronal axonal fibers and associated with myelin sheets (at protein level). Expression tends to be lower in the brain of Alzheimer disease patients compared to healthy individuals (at protein level).

It localises to the cytoplasm. Its subcellular location is the perinuclear region. The protein resides in the cell membrane. The protein localises to the cell projection. It is found in the axon. Functionally, inhibitor of neuronal axonal outgrowth. Acts as a negative regulator of CDC42 and STAT3 and a positive regulator of STMN2. Positive regulator of CDC27. In Homo sapiens (Human), this protein is Myelin-associated neurite-outgrowth inhibitor (FAM168B).